Reading from the N-terminus, the 130-residue chain is Small ribosomal subunit protein uS11 (130 aa).

It belongs to the universal ribosomal protein uS11 family. Part of the 30S ribosomal subunit. Interacts with proteins S7 and S18. Binds to IF-3.

In terms of biological role, located on the platform of the 30S subunit, it bridges several disparate RNA helices of the 16S rRNA. Forms part of the Shine-Dalgarno cleft in the 70S ribosome. The sequence is that of Small ribosomal subunit protein uS11 from Gloeobacter violaceus (strain ATCC 29082 / PCC 7421).